Consider the following 192-residue polypeptide: Fe/S biogenesis protein NfuA (192 aa).

2 residues coordinate [4Fe-4S] cluster: Cys149 and Cys152.

This sequence belongs to the NfuA family. As to quaternary structure, homodimer. [4Fe-4S] cluster is required as a cofactor.

Functionally, involved in iron-sulfur cluster biogenesis. Binds a 4Fe-4S cluster, can transfer this cluster to apoproteins, and thereby intervenes in the maturation of Fe/S proteins. Could also act as a scaffold/chaperone for damaged Fe/S proteins. The sequence is that of Fe/S biogenesis protein NfuA from Shewanella baltica (strain OS223).